Consider the following 269-residue polypeptide: Putative ABC transporter ATP-binding protein PF0528 (269 aa).

An ABC transporter domain is found at 6 to 237 (IVVENLYSSY…EILKRNNLDV (232 aa)). 39-46 (GPNGAGKS) contacts ATP.

This sequence belongs to the ABC transporter superfamily.

The protein localises to the cell membrane. Functionally, probably part of an ABC transporter complex. Responsible for energy coupling to the transport system. In Pyrococcus furiosus (strain ATCC 43587 / DSM 3638 / JCM 8422 / Vc1), this protein is Putative ABC transporter ATP-binding protein PF0528.